We begin with the raw amino-acid sequence, 557 residues long: Elongator complex protein 3 (557 aa).

One can recognise a Radical SAM core domain in the interval 91-381; that stretch reads RTASGIAVVA…YRVQRDIPMP (291 aa). [4Fe-4S] cluster-binding residues include C108, C118, and C121. Acetyl-CoA is bound at residue K173. Residues 405-557 enclose the N-acetyltransferase domain; that stretch reads TTCRDVRTRE…LDGPYMSKRI (153 aa). A Glycyl lysine isopeptide (Lys-Gly) (interchain with G-Cter in ubiquitin) cross-link involves residue K453. Acetyl-CoA contacts are provided by residues 485–488, 508–510, and Y541; these read ELHV and FGT.

The protein belongs to the ELP3 family. As to quaternary structure, component of the elongator complex which consists of ELP1/IKI3, ELP2, ELP3, ELP4, ELP5/IKI1 and ELP6. The elongator complex is composed of two copies of the Elp123 subcomplex (composed of ELP1/IKI3, ELP2 and ELP3) and two copies of the Elp456 subcomplex (composed of ELP4, ELP5/IKI1 and ELP6). The Elp123 subcomplex forms a two-lobed scaffold, which binds the Elp456 subcomplex asymmetrically. In each lobe, ELP2 is tightly sandwiched between ELP1/IKI3 and ELP3. The Elp123 subcomplex binds tRNA through ELP1/IKI3 and ELP3 and can bind 2 tRNAs simultaneously. tRNA-binding induces conformational rearrangements which precisely position the targeted anticodon base in the active site. ELP3 interacts with KTI11/DPH3. ELP3 interacts with KTI12. The Elp456 subcomplex binds tRNA and has ATPase activity. It depends on [4Fe-4S] cluster as a cofactor.

It is found in the cytoplasm. Its subcellular location is the nucleus. It carries out the reaction uridine(34) in tRNA + acetyl-CoA + S-adenosyl-L-methionine + H2O = 5-(carboxymethyl)uridine(34) in tRNA + 5'-deoxyadenosine + L-methionine + CoA + 2 H(+). Its pathway is tRNA modification; 5-methoxycarbonylmethyl-2-thiouridine-tRNA biosynthesis. Catalytic tRNA acetyltransferase subunit of the elongator complex which is required for multiple tRNA modifications, including mcm5U (5-methoxycarbonylmethyl uridine), mcm5s2U (5-methoxycarbonylmethyl-2-thiouridine), and ncm5U (5-carbamoylmethyl uridine). In the elongator complex, acts as a tRNA uridine(34) acetyltransferase, which mediates formation of carboxymethyluridine in the wobble base at position 34 in tRNAs. The complex functions as a gamma-toxin target (TOT); disruption of the complex confers resistance to Kluyveromyces lactis toxin zymocin (pGKL1 killer toxin). May also be involved in sensitivity to Pichia inositovora toxin. Independently, ELP3 may be involved in polarized exocytosis. In Saccharomyces cerevisiae (strain ATCC 204508 / S288c) (Baker's yeast), this protein is Elongator complex protein 3.